An 89-amino-acid chain; its full sequence is MALLDFFLSRKKTTANIAKERLQIIVAERRRGDSEPAYLPDMKRDILAVICKYIQVDPDMLSVQFEQKGDDISVLELNITLPEAEETQK.

It belongs to the MinE family.

Its function is as follows. Prevents the cell division inhibition by proteins MinC and MinD at internal division sites while permitting inhibition at polar sites. This ensures cell division at the proper site by restricting the formation of a division septum at the midpoint of the long axis of the cell. This chain is Cell division topological specificity factor, found in Photorhabdus laumondii subsp. laumondii (strain DSM 15139 / CIP 105565 / TT01) (Photorhabdus luminescens subsp. laumondii).